The following is a 442-amino-acid chain: ATP-dependent protease ATPase subunit HslU (442 aa).

Residues I18 and 60-65 contribute to the ATP site; that span reads GVGKTE. A disordered region spans residues 136–157; it reads LPKPKNDWESTETDSSSNTRQV. Positions 255, 320, and 392 each coordinate ATP.

This sequence belongs to the ClpX chaperone family. HslU subfamily. As to quaternary structure, a double ring-shaped homohexamer of HslV is capped on each side by a ring-shaped HslU homohexamer. The assembly of the HslU/HslV complex is dependent on binding of ATP.

The protein localises to the cytoplasm. Its function is as follows. ATPase subunit of a proteasome-like degradation complex; this subunit has chaperone activity. The binding of ATP and its subsequent hydrolysis by HslU are essential for unfolding of protein substrates subsequently hydrolyzed by HslV. HslU recognizes the N-terminal part of its protein substrates and unfolds these before they are guided to HslV for hydrolysis. This chain is ATP-dependent protease ATPase subunit HslU, found in Shewanella baltica (strain OS185).